The following is an 82-amino-acid chain: Beta-neurotoxin Css9 (82 aa).

Residues 1–17 (MKLLMLIVALMIIGVQS) form the signal peptide. Positions 18–81 (KDGYPMDHKG…VWDRATNKCR (64 aa)) constitute an LCN-type CS-alpha/beta domain. 4 cysteine pairs are disulfide-bonded: Cys-28/Cys-80, Cys-32/Cys-54, Cys-39/Cys-61, and Cys-43/Cys-63.

Belongs to the long (4 C-C) scorpion toxin superfamily. Sodium channel inhibitor family. Beta subfamily. In terms of tissue distribution, expressed by the venom gland.

The protein resides in the secreted. Functionally, beta toxins bind voltage-independently at site-4 of sodium channels (Nav) and shift the voltage of activation toward more negative potentials thereby affecting sodium channel activation and promoting spontaneous and repetitive firing. This toxin compete with high affinity with 125I-Css4 bound on rat brain synaptosome and may bind with high affinity to Nav1.1/SCN1A, Nav1.2/SCN2A and Nav1.6/SCN8A. The chain is Beta-neurotoxin Css9 from Centruroides suffusus (Durango bark scorpion).